Here is a 142-residue protein sequence, read N- to C-terminus: UPF0306 protein Ent638_3591 (142 aa).

The protein belongs to the UPF0306 family.

The sequence is that of UPF0306 protein Ent638_3591 from Enterobacter sp. (strain 638).